The chain runs to 432 residues: 3-chlorobenzoate-3,4-dioxygenase oxygenase subunit (432 aa).

Residues 27 to 133 (WIPALKSTEL…VKEMAGVVWV (107 aa)) enclose the Rieske domain. Cys-69, His-71, Cys-88, and His-91 together coordinate [2Fe-2S] cluster. Residues His-180 and His-185 each coordinate Fe cation.

The protein belongs to the bacterial ring-hydroxylating dioxygenase alpha subunit family. In terms of assembly, this dioxygenase system consists of two proteins: an oxygenase and an oxygenase reductase. The cofactor is [2Fe-2S] cluster. Fe cation serves as cofactor.

The chain is 3-chlorobenzoate-3,4-dioxygenase oxygenase subunit (cbaA) from Comamonas testosteroni (Pseudomonas testosteroni).